We begin with the raw amino-acid sequence, 43 residues long: Thymosin beta-b (43 aa).

Basic and acidic residues-rich tracts occupy residues methionine 1–glutamate 25 and glutamate 33–alanine 43. Residues methionine 1–alanine 43 are disordered.

This sequence belongs to the thymosin beta family.

Its subcellular location is the cytoplasm. It localises to the cytoskeleton. Its function is as follows. Plays an important role in the organization of the cytoskeleton. Binds to and sequesters actin monomers (G actin) and therefore inhibits actin polymerization. The protein is Thymosin beta-b of Cyprinus carpio (Common carp).